Reading from the N-terminus, the 541-residue chain is Neutral amino acid transporter B(0) (541 aa).

An N-acetylmethionine modification is found at methionine 1. Over 1–51 (MVADPPRDSKGLAAAEPTANGGLALASIEDQGAAAGGYCGSRDQVRRCLRA) the chain is Cytoplasmic. Residues 52–81 (NLLVLLTVVAVVAGVALGLGVSGAGGALAL) traverse the membrane as a helical segment. The Extracellular portion of the chain corresponds to 82-94 (GPERLSAFVFPGE). A helical transmembrane segment spans residues 95–116 (LLLRLLRMIILPLVVCSLIGGA). The Cytoplasmic portion of the chain corresponds to 117-130 (ASLDPGALGRLGAW). A helical membrane pass occupies residues 131–153 (ALLFFLVTTLLASALGVGLALAL). Topologically, residues 154 to 224 (QPGAASAAIN…GTRVKVPVGQ (71 aa)) are extracellular. Residues asparagine 163 and asparagine 212 are each glycosylated (N-linked (GlcNAc...) asparagine). A helical transmembrane segment spans residues 225 to 248 (EVEGMNILGLVVFAIVFGVALRKL). The Cytoplasmic portion of the chain corresponds to 249 to 257 (GPEGELLIR). The chain crosses the membrane as a helical span at residues 258–285 (FFNSFNEATMVLVSWIMWYAPVGIMFLV). Residues 286-306 (AGKIVEMEDVGLLFARLGKYI) are Extracellular-facing. A helical transmembrane segment spans residues 307–328 (LCCLLGHAIHGLLVLPLIYFLF). At 329–333 (TRKNP) the chain is on the cytoplasmic side. The discontinuously helical intramembrane region spans 334–364 (YRFLWGIVTPLATAFGTSSSSATLPLMMKCV). At 365–373 (EENNGVAKH) the chain is on the cytoplasmic side. A helical membrane pass occupies residues 374–400 (ISRFILPIGATVNMDGAALFQCVAAVF). 3 residues coordinate Na(+): glycine 382, threonine 384, and asparagine 386. Topologically, residues 401 to 413 (IAQLSQQSLDFVK) are extracellular. Positions 414–447 (IITILVTATASSVGAAGIPAGGVLTLAIILEAVN) form an intramembrane region, discontinuously helical. The Extracellular portion of the chain corresponds to 448-460 (LPVDHISLILAVD). A helical transmembrane segment spans residues 461–482 (WLVDRSCTVLNVEGDALGAGLL). 2 residues coordinate Na(+): asparagine 471 and aspartate 475. Over 483-541 (QNYVDRTESRSTEPELIQVKSELPLDPLPVPTEEGNPLLKHYRGPAGDATVASEKESVM) the chain is Cytoplasmic. The residue at position 493 (serine 493) is a Phosphoserine. Residue threonine 494 is modified to Phosphothreonine. Residues serine 503, serine 535, and serine 539 each carry the phosphoserine modification. The interval 511 to 541 (PVPTEEGNPLLKHYRGPAGDATVASEKESVM) is disordered.

It belongs to the dicarboxylate/amino acid:cation symporter (DAACS) (TC 2.A.23) family. SLC1A5 subfamily. In terms of assembly, homotrimer. Interacts with ERVH48-1/suppressyn; may negatively regulate syncytialization. Placenta, lung, skeletal muscle, kidney, pancreas, and intestine. Expressed in CD34-positive hematopoietic progenitors (at protein level).

Its subcellular location is the cell membrane. The protein localises to the melanosome. It carries out the reaction L-glutamine(out) + L-serine(in) + Na(+)(out) = L-glutamine(in) + L-serine(out) + Na(+)(in). The catalysed reaction is L-glutamine(in) + L-serine(out) + Na(+)(out) = L-glutamine(out) + L-serine(in) + Na(+)(in). It catalyses the reaction L-threonine(in) + L-glutamine(out) + Na(+)(out) = L-threonine(out) + L-glutamine(in) + Na(+)(in). The enzyme catalyses L-threonine(out) + L-glutamine(in) + Na(+)(out) = L-threonine(in) + L-glutamine(out) + Na(+)(in). It carries out the reaction L-asparagine(in) + L-glutamine(out) + Na(+)(out) = L-asparagine(out) + L-glutamine(in) + Na(+)(in). The catalysed reaction is L-asparagine(out) + L-glutamine(in) + Na(+)(out) = L-asparagine(in) + L-glutamine(out) + Na(+)(in). It catalyses the reaction L-glutamine(in) + L-alanine(out) + Na(+)(out) = L-glutamine(out) + L-alanine(in) + Na(+)(in). The enzyme catalyses L-valine(out) + L-glutamine(in) + Na(+)(out) = L-valine(in) + L-glutamine(out) + Na(+)(in). It carries out the reaction L-glutamine(in) + L-methionine(out) + Na(+)(out) = L-glutamine(out) + L-methionine(in) + Na(+)(in). The catalysed reaction is L-glutamine(in) + L-glutamate(out) + Na(+)(out) + H(+)(out) = L-glutamine(out) + L-glutamate(in) + Na(+)(in) + H(+)(in). It catalyses the reaction D-serine(in) + L-glutamine(out) + Na(+)(out) = D-serine(out) + L-glutamine(in) + Na(+)(in). The enzyme catalyses D-serine(in) + L-alanine(out) + Na(+)(out) = D-serine(out) + L-alanine(in) + Na(+)(in). It carries out the reaction nitrate(in) = nitrate(out). The catalysed reaction is iodide(out) = iodide(in). It catalyses the reaction thiocyanate(in) = thiocyanate(out). Its activity is regulated as follows. Regulated by L-cysteine, which can either inhibit substrate influx or trigger substrate efflux without being transported itself. In terms of biological role, sodium-coupled antiporter of neutral amino acids. In a tri-substrate transport cycle, exchanges neutral amino acids between the extracellular and intracellular compartments, coupled to the inward cotransport of at least one sodium ion. The preferred substrate is the essential amino acid L-glutamine, a precursor for biosynthesis of proteins, nucleotides and amine sugars as well as an alternative fuel for mitochondrial oxidative phosphorylation. Exchanges L-glutamine with other neutral amino acids such as L-serine, L-threonine and L-asparagine in a bidirectional way. Provides L-glutamine to proliferating stem and activated cells driving the metabolic switch toward cell differentiation. The transport cycle is usually pH-independent, with the exception of L-glutamate. Transports extracellular L-glutamate coupled to the cotransport of one proton and one sodium ion in exchange for intracellular L-glutamine counter-ion. May provide for L-glutamate uptake in glial cells regulating glutamine/glutamate cycle in the nervous system. Can transport D-amino acids. Mediates D-serine release from the retinal glia potentially affecting NMDA receptor function in retinal neurons. Displays sodium- and amino acid-dependent but uncoupled channel-like anion conductance with a preference SCN(-) &gt;&gt; NO3(-) &gt; I(-) &gt; Cl(-). Through binding of the fusogenic protein syncytin-1/ERVW-1 may mediate trophoblasts syncytialization, the spontaneous fusion of their plasma membranes, an essential process in placental development. (Microbial infection) Acts as a cell surface receptor for Feline endogenous virus RD114. Its function is as follows. (Microbial infection) Acts as a cell surface receptor for Baboon M7 endogenous virus. Functionally, (Microbial infection) Acts as a cell surface receptor for type D simian retroviruses. The polypeptide is Neutral amino acid transporter B(0) (Homo sapiens (Human)).